A 674-amino-acid chain; its full sequence is Secretin GspD (674 aa).

A signal peptide spans 1 to 24; that stretch reads MKYWLKKSSWLLAGSLLSTPLAMA. The segment at 25–121 is N0; it reads NEFSASFKGT…VLSGEERANG (97 aa). The interval 123 to 187 is N1; sequence EVITQVVAVK…EIIRRVDQAG (65 aa). The N2 stretch occupies residues 188–261; it reads DKEIEVVELN…LIKQLDVEMA (74 aa). The interval 264–338 is N3; the sequence is GNNRVVYLKY…AMLEVIGQLD (75 aa). The tract at residues 343–612 is secretin; the sequence is QVLIEALIVE…VFIKPTIIRD (270 aa). Residues 395-417 form a cap gate region; the sequence is DTTQTKAVYDTNNNFLRNETTTT. Residues 614–674 form a s domain region; that stretch reads VTADGITQRK…AFIEQMEAKQ (61 aa).

This sequence belongs to the bacterial secretin family. GSP D subfamily. Forms a cylindrical channel with 15 subunits; unlike E.coli no 16-subunit channels are seen. The closed pentadeacameric channels are 195 Angstroms long and 145 Angstroms in diameter. Each subunit turns in a clock-wise manner around the channel.

The protein resides in the cell outer membrane. Involved in a type II secretion system (T2SS, formerly general secretion pathway, GSP) for the export of proteins. Required for secretion of cholera toxin through the outer membrane. This subunit forms the outer membrane channel. The chain is Secretin GspD (epsD) from Vibrio cholerae serotype O1 (strain ATCC 39315 / El Tor Inaba N16961).